The sequence spans 329 residues: Ketol-acid reductoisomerase (NADP(+)) (329 aa).

Residues 2–182 (TQLFYDTDAD…GGTRAGILET (181 aa)) enclose the KARI N-terminal Rossmann domain. Residues 25-28 (YGSQ), Ser51, Ser53, and 83-86 (DEFQ) each bind NADP(+). Residue His108 is part of the active site. Gly134 contributes to the NADP(+) binding site. The region spanning 183–328 (NFKEETETDL…KSLRSMFSWL (146 aa)) is the KARI C-terminal knotted domain. Positions 191, 195, 227, and 231 each coordinate Mg(2+). Ser252 serves as a coordination point for substrate.

Belongs to the ketol-acid reductoisomerase family. Mg(2+) is required as a cofactor.

The enzyme catalyses (2R)-2,3-dihydroxy-3-methylbutanoate + NADP(+) = (2S)-2-acetolactate + NADPH + H(+). It catalyses the reaction (2R,3R)-2,3-dihydroxy-3-methylpentanoate + NADP(+) = (S)-2-ethyl-2-hydroxy-3-oxobutanoate + NADPH + H(+). The protein operates within amino-acid biosynthesis; L-isoleucine biosynthesis; L-isoleucine from 2-oxobutanoate: step 2/4. It participates in amino-acid biosynthesis; L-valine biosynthesis; L-valine from pyruvate: step 2/4. In terms of biological role, involved in the biosynthesis of branched-chain amino acids (BCAA). Catalyzes an alkyl-migration followed by a ketol-acid reduction of (S)-2-acetolactate (S2AL) to yield (R)-2,3-dihydroxy-isovalerate. In the isomerase reaction, S2AL is rearranged via a Mg-dependent methyl migration to produce 3-hydroxy-3-methyl-2-ketobutyrate (HMKB). In the reductase reaction, this 2-ketoacid undergoes a metal-dependent reduction by NADPH to yield (R)-2,3-dihydroxy-isovalerate. The sequence is that of Ketol-acid reductoisomerase (NADP(+)) from Prochlorococcus marinus (strain MIT 9301).